The chain runs to 818 residues: Phosphoenolpyruvate synthase (818 aa).

The active-site Tele-phosphohistidine intermediate is His-442. Residues Arg-532, Arg-601, Glu-703, Gly-724, Ser-725, Asn-726, and Asp-727 each contribute to the substrate site. Glu-703 is a binding site for Mg(2+). Asp-727 contributes to the Mg(2+) binding site. Residue Cys-774 is the Proton donor of the active site.

The protein belongs to the PEP-utilizing enzyme family. Mg(2+) serves as cofactor.

It catalyses the reaction pyruvate + ATP + H2O = phosphoenolpyruvate + AMP + phosphate + 2 H(+). The protein operates within carbohydrate biosynthesis; gluconeogenesis. In terms of biological role, catalyzes the phosphorylation of pyruvate to phosphoenolpyruvate. This is Phosphoenolpyruvate synthase (ppsA) from Synechocystis sp. (strain ATCC 27184 / PCC 6803 / Kazusa).